The primary structure comprises 268 residues: Glycine/sarcosine N-methyltransferase (268 aa).

S-adenosyl-L-methionine is bound by residues Tyr26, Trp34, Arg43, Ala67, Asp88, 114 to 115 (DW), and Leu132. Residues Asn134, Arg167, and Tyr206 each contribute to the substrate site.

This sequence belongs to the class I-like SAM-binding methyltransferase superfamily. Glycine N-methyltransferase family. Monomer.

The enzyme catalyses glycine + 2 S-adenosyl-L-methionine = N,N-dimethylglycine + 2 S-adenosyl-L-homocysteine + 2 H(+). It carries out the reaction glycine + S-adenosyl-L-methionine = sarcosine + S-adenosyl-L-homocysteine + H(+). It catalyses the reaction sarcosine + S-adenosyl-L-methionine = N,N-dimethylglycine + S-adenosyl-L-homocysteine + H(+). The protein operates within amine and polyamine biosynthesis; betaine biosynthesis via glycine pathway; betaine from glycine: step 1/3. Its pathway is amine and polyamine biosynthesis; betaine biosynthesis via glycine pathway; betaine from glycine: step 2/3. Its activity is regulated as follows. p-chloromercuribenzoic acid inhibits more than 95% of the GSMT activities on glycine and sarcosine, and S-adenosylhomocysteine (AdoHcy) inhibits completely GSMT activities. Its function is as follows. Catalyzes the methylation of glycine and sarcosine to sarcosine and dimethylglycine, respectively, with S-adenosylmethionine (AdoMet) acting as the methyl donor. It has strict specificity for glycine and sarcosine as the methyl group acceptors. In Halorhodospira halochloris (Ectothiorhodospira halochloris), this protein is Glycine/sarcosine N-methyltransferase.